The chain runs to 517 residues: Cell division cycle protein 73 (517 aa).

Positions 124 to 135 (SEPEAKKPRLDG) are enriched in basic and acidic residues. Disordered stretches follow at residues 124–159 (SEPE…SAAK) and 306–326 (GHHA…LAKP). Residues 315–324 (DAPPGRPPLA) show a composition bias toward pro residues.

Belongs to the CDC73 family. Component of the PAF1 complex which consists of at least cdc-73, ctr-9, leo-1, pafo-1 and rtfo-1.

It localises to the nucleus. Its function is as follows. Component of the PAF1 complex which is a multifunctional complex involved in transcription initiation via genetic interactions with TATA-binding proteins, elongation and transcription-coupled histone modification. This chain is Cell division cycle protein 73, found in Caenorhabditis elegans.